Here is a 481-residue protein sequence, read N- to C-terminus: Bestrophin homolog 17 (481 aa).

Residues 1–27 (MTVSYQLDVSSGNPLLFLRLLGRWRGS) are Cytoplasmic-facing. The helical transmembrane segment at 28 to 48 (IWKSVVGDLFVWLLFYYAIYF) threads the bilayer. Topologically, residues 49–95 (AYRYAFSKQLQTVFEEISIHTDDRMKYLPLTFMLGFFVTTVFERWRS) are extracellular. The helical transmembrane segment at 96 to 116 (ALNVMPFIESVALSVAVLLPG) threads the bilayer. Topologically, residues 117-230 (KGREDRLTRR…AMETLIKFDA (114 aa)) are cytoplasmic. A helical transmembrane segment spans residues 231 to 251 (IPIPIAYPQVVFLAVRVYFAI). At 252–274 (CLVSRQFLISDMKSKTQMDWPVP) the chain is on the extracellular side. Residues 275-295 (IMTVLEFIFVIGWMKVAEVLL) traverse the membrane as a helical segment. Residues 296–481 (NPLGEDDDDF…SSEESVDKKG (186 aa)) are Cytoplasmic-facing. Residues 427 to 481 (AGMLNKSTQPDRPTMETVSEEHEPSHFYRGDRVHSSDSGLSKTQQSSEESVDKKG) form a disordered region. The span at 445-461 (SEEHEPSHFYRGDRVHS) shows a compositional bias: basic and acidic residues. Residues 462 to 474 (SDSGLSKTQQSSE) show a composition bias toward polar residues.

The protein belongs to the anion channel-forming bestrophin (TC 1.A.46) family. Calcium-sensitive chloride channel subfamily. Forms oligomers.

The protein localises to the cell membrane. Its function is as follows. Forms chloride channels. The protein is Bestrophin homolog 17 of Caenorhabditis elegans.